Consider the following 671-residue polypeptide: NADH-quinone oxidoreductase subunit G (671 aa).

Residues 1–78 form the 2Fe-2S ferredoxin-type domain; the sequence is MIKLNIDGSE…GMVIHTDTPM (78 aa). Positions 34, 45, 48, and 62 each coordinate [2Fe-2S] cluster. The region spanning 78-117 is the 4Fe-4S His(Cys)3-ligated-type domain; that stretch reads MVKKAREGVMEFLLINHPLDCPICDQGGECDLQDQAFRYG. Histidine 94, cysteine 98, cysteine 101, cysteine 107, cysteine 146, cysteine 149, cysteine 152, and cysteine 196 together coordinate [4Fe-4S] cluster. One can recognise a 4Fe-4S Mo/W bis-MGD-type domain in the interval 215-271; it reads LKHTASIGVHDAEGSNIRIDSRGDEVMRILPRVNEEINEEWLSDKNRFSYDGLKYQR.

It belongs to the complex I 75 kDa subunit family. Requires [2Fe-2S] cluster as cofactor. [4Fe-4S] cluster is required as a cofactor.

The enzyme catalyses a quinone + NADH + 5 H(+)(in) = a quinol + NAD(+) + 4 H(+)(out). NDH-1 shuttles electrons from NADH, via FMN and iron-sulfur (Fe-S) centers, to quinones in the respiratory chain. Couples the redox reaction to proton translocation (for every two electrons transferred, four hydrogen ions are translocated across the cytoplasmic membrane), and thus conserves the redox energy in a proton gradient. This Rickettsia felis (strain ATCC VR-1525 / URRWXCal2) (Rickettsia azadi) protein is NADH-quinone oxidoreductase subunit G (nuoG).